The chain runs to 159 residues: MTPRNPSNYDSLFDSSIFSSTLFSSSLYHSAFDCSFGISFTIQPPIEYIVLSKPCFFAITPLLTLRCNGIAWHDSLDMTIWVSTVTSLPISHCLIVSLSLSHAFPSLFYSALVLSCLSLLCLAFTPRIPFHLHSVVCSYFGRECLSPLFPSPYFTCHNG.

Helical transmembrane passes span 22 to 42 (LFSSSLYHSAFDCSFGISFTI), 45 to 65 (PIEYIVLSKPCFFAITPLLTL), 80 to 100 (IWVSTVTSLPISHCLIVSLSL), and 104 to 124 (FPSLFYSALVLSCLSLLCLAF).

It localises to the membrane. This is an uncharacterized protein from Schizosaccharomyces pombe (strain 972 / ATCC 24843) (Fission yeast).